A 255-amino-acid chain; its full sequence is Putative enoyl-CoA hydratase/isomerase YhaR (255 aa).

2 consecutive transmembrane segments (helical) span residues 96-116 (VTIAAIHGAAAGLGLSLALCA) and 126-146 (VLAMNFIGIGLVPDGGGHYLL).

Belongs to the enoyl-CoA hydratase/isomerase family.

The protein localises to the cell membrane. The sequence is that of Putative enoyl-CoA hydratase/isomerase YhaR (yhaR) from Bacillus subtilis (strain 168).